We begin with the raw amino-acid sequence, 166 residues long: Large ribosomal subunit protein uL10 (166 aa).

The protein belongs to the universal ribosomal protein uL10 family. Part of the ribosomal stalk of the 50S ribosomal subunit. The N-terminus interacts with L11 and the large rRNA to form the base of the stalk. The C-terminus forms an elongated spine to which L12 dimers bind in a sequential fashion forming a multimeric L10(L12)X complex.

In terms of biological role, forms part of the ribosomal stalk, playing a central role in the interaction of the ribosome with GTP-bound translation factors. This Bacillus licheniformis (strain ATCC 14580 / DSM 13 / JCM 2505 / CCUG 7422 / NBRC 12200 / NCIMB 9375 / NCTC 10341 / NRRL NRS-1264 / Gibson 46) protein is Large ribosomal subunit protein uL10.